The following is a 406-amino-acid chain: MTQMHSTQPMSIGIVIVAAGRGERAGSPEEGPKQYRAIGGRPVIAHTLEKFVTWPQTTKIVIVIHRDDEKLLRSAQETIVDSSGVEIAFGGTTRQQSVLAGVRQLEKTGVSHVMIHDAVRPFFDHDLLDRVAAALAAGAPAVLPAMPVTDTLKRADTDALVTETVPRAGLYAAQTPQSFRLADILAAHEKAAADNKTDFTDDAAIAEWAGLPVTLVAGSADNVKLTIKRDIAMADEKLSAGLLPDVRTGNGYDVHQLEPGDGVTLCGVFIPHDQTLKGHSDADVALHALTDALLATCGAGDIGDHFPPSDPQWRGAPSRIFIEHAARIVRDHGGTIMNADVSLIAEAPKVGPHREAMRAKLSEFLGISLERCSVKATTNEQIGFVGRREGIAAIATATVVYRGGRP.

The segment at 1 to 246 (MTQMHSTQPM…KLSAGLLPDV (246 aa)) is 2-C-methyl-D-erythritol 4-phosphate cytidylyltransferase. Residues 247–406 (RTGNGYDVHQ…ATVVYRGGRP (160 aa)) form a 2-C-methyl-D-erythritol 2,4-cyclodiphosphate synthase region. 2 residues coordinate a divalent metal cation: aspartate 253 and histidine 255. 4-CDP-2-C-methyl-D-erythritol 2-phosphate is bound by residues 253-255 (DVH) and 279-280 (HS). Residue histidine 287 participates in a divalent metal cation binding. 4-CDP-2-C-methyl-D-erythritol 2-phosphate-binding positions include 301–303 (DIG), 377–380 (TTNE), phenylalanine 384, and arginine 387.

This sequence in the N-terminal section; belongs to the IspD/TarI cytidylyltransferase family. IspD subfamily. The protein in the C-terminal section; belongs to the IspF family. A divalent metal cation serves as cofactor.

It carries out the reaction 2-C-methyl-D-erythritol 4-phosphate + CTP + H(+) = 4-CDP-2-C-methyl-D-erythritol + diphosphate. The enzyme catalyses 4-CDP-2-C-methyl-D-erythritol 2-phosphate = 2-C-methyl-D-erythritol 2,4-cyclic diphosphate + CMP. The protein operates within isoprenoid biosynthesis; isopentenyl diphosphate biosynthesis via DXP pathway; isopentenyl diphosphate from 1-deoxy-D-xylulose 5-phosphate: step 2/6. Its pathway is isoprenoid biosynthesis; isopentenyl diphosphate biosynthesis via DXP pathway; isopentenyl diphosphate from 1-deoxy-D-xylulose 5-phosphate: step 4/6. Functionally, bifunctional enzyme that catalyzes the formation of 4-diphosphocytidyl-2-C-methyl-D-erythritol from CTP and 2-C-methyl-D-erythritol 4-phosphate (MEP) (IspD), and catalyzes the conversion of 4-diphosphocytidyl-2-C-methyl-D-erythritol 2-phosphate (CDP-ME2P) to 2-C-methyl-D-erythritol 2,4-cyclodiphosphate (ME-CPP) with a corresponding release of cytidine 5-monophosphate (CMP) (IspF). This chain is Bifunctional enzyme IspD/IspF, found in Rhizobium rhizogenes (strain K84 / ATCC BAA-868) (Agrobacterium radiobacter).